The primary structure comprises 315 residues: Uracil-DNA glycosylase (315 aa).

The span at alanine 35–proline 80 shows a compositional bias: low complexity. The segment at alanine 35–threonine 88 is disordered. Aspartate 158 (proton acceptor) is an active-site residue.

This sequence belongs to the uracil-DNA glycosylase (UDG) superfamily. UNG family.

Its subcellular location is the host nucleus. It carries out the reaction Hydrolyzes single-stranded DNA or mismatched double-stranded DNA and polynucleotides, releasing free uracil.. Excises uracil residues from the DNA which can arise as a result of misincorporation of dUMP residues by DNA polymerase or deamination of cytosines. Therefore may reduce deleterious uracil incorporation into the viral genome, particularly in terminally differentiated cells which lack DNA repair enzymes. This chain is Uracil-DNA glycosylase (UL2), found in Suid herpesvirus 1 (strain Indiana-Funkhauser / Becker) (SuHV-1).